Here is a 523-residue protein sequence, read N- to C-terminus: Tryptophan 6-halogenase SttH (523 aa).

6 residues coordinate FAD: G14, S40, I43, V46, V48, and A51. K79 is a catalytic residue. P97 provides a ligand contact to L-tryptophan. 2 residues coordinate FAD: V203 and L354. Residues T365 and G366 each contribute to the chloride site. Residue I367 coordinates FAD. L-tryptophan is bound by residues Y456 and Y457.

The protein belongs to the flavin-dependent halogenase family. Bacterial tryptophan halogenase subfamily. In terms of assembly, homodimer.

The enzyme catalyses L-tryptophan + FADH2 + chloride + O2 = 6-chloro-L-tryptophan + FAD + 2 H2O. It carries out the reaction D-tryptophan + FADH2 + chloride + O2 = 6-chloro-D-tryptophan + FAD + 2 H2O. Catalyzes the chlorination of tryptophan (Trp) at C6 position to yield 6-chloro-tryptophan. Accepts both L and D-Trp as the substrates. The enzyme also uses bromide to yield 6-bromo-Trp. In vitro, can also catalyze the halogenation of 3-indolepropionic acid, N-methyltryptophan and non-indolic aromatic substrates such as kynurenine, anthranilamide and N-phenylanthranilic acid. The chain is Tryptophan 6-halogenase SttH from Streptomyces toxytricini (Actinomyces toxytricini).